A 327-amino-acid chain; its full sequence is DNA primase large subunit PriL (327 aa).

4 residues coordinate [4Fe-4S] cluster: cysteine 218, cysteine 290, cysteine 299, and cysteine 307.

It belongs to the eukaryotic-type primase large subunit family. Heterodimer of a small subunit (PriS) and a large subunit (PriL). [4Fe-4S] cluster is required as a cofactor.

Regulatory subunit of DNA primase, an RNA polymerase that catalyzes the synthesis of short RNA molecules used as primers for DNA polymerase during DNA replication. Stabilizes and modulates the activity of the small subunit, increasing the rate of DNA synthesis, and conferring RNA synthesis capability. The DNA polymerase activity may enable DNA primase to also catalyze primer extension after primer synthesis. May also play a role in DNA repair. The sequence is that of DNA primase large subunit PriL from Thermoplasma volcanium (strain ATCC 51530 / DSM 4299 / JCM 9571 / NBRC 15438 / GSS1).